Consider the following 435-residue polypeptide: NADH-quinone oxidoreductase subunit D (435 aa).

It belongs to the complex I 49 kDa subunit family. In terms of assembly, NDH-1 is composed of 14 different subunits. Subunits NuoB, C, D, E, F, and G constitute the peripheral sector of the complex.

It is found in the cell inner membrane. It carries out the reaction a quinone + NADH + 5 H(+)(in) = a quinol + NAD(+) + 4 H(+)(out). In terms of biological role, NDH-1 shuttles electrons from NADH, via FMN and iron-sulfur (Fe-S) centers, to quinones in the respiratory chain. The immediate electron acceptor for the enzyme in this species is believed to be ubiquinone. Couples the redox reaction to proton translocation (for every two electrons transferred, four hydrogen ions are translocated across the cytoplasmic membrane), and thus conserves the redox energy in a proton gradient. The sequence is that of NADH-quinone oxidoreductase subunit D from Xanthomonas axonopodis pv. citri (strain 306).